The following is a 236-amino-acid chain: Uridylate kinase (236 aa).

Residue 8–11 (KLSG) participates in ATP binding. The involved in allosteric activation by GTP stretch occupies residues 16-21 (GEQGYG). Residues G51 and R55 each coordinate ATP. Residues D70 and 131-138 (TGNPYFST) each bind UMP. Residues N159, Y165, and D168 each contribute to the ATP site.

Belongs to the UMP kinase family. In terms of assembly, homohexamer.

The protein resides in the cytoplasm. It catalyses the reaction UMP + ATP = UDP + ADP. Its pathway is pyrimidine metabolism; CTP biosynthesis via de novo pathway; UDP from UMP (UMPK route): step 1/1. With respect to regulation, allosterically activated by GTP. Inhibited by UTP. Functionally, catalyzes the reversible phosphorylation of UMP to UDP. This chain is Uridylate kinase, found in Shouchella clausii (strain KSM-K16) (Alkalihalobacillus clausii).